Here is a 553-residue protein sequence, read N- to C-terminus: Arginine--tRNA ligase (553 aa).

A 'HIGH' region motif is present at residues 130–140; it reads ANPTGDLHIGH.

The protein belongs to the class-I aminoacyl-tRNA synthetase family. In terms of assembly, monomer.

The protein resides in the cytoplasm. It catalyses the reaction tRNA(Arg) + L-arginine + ATP = L-arginyl-tRNA(Arg) + AMP + diphosphate. The sequence is that of Arginine--tRNA ligase from Staphylococcus epidermidis (strain ATCC 12228 / FDA PCI 1200).